The sequence spans 1885 residues: Chitin synthase 5 (1885 aa).

Residues 1–789 (MATRGNVPAH…SIALTGSQAA (789 aa)) form the Myosin motor domain. 99-106 (GESGSGKT) contributes to the ATP binding site. N-linked (GlcNAc...) asparagine glycans are attached at residues Asn-219 and Asn-429. Residues 601–649 (KPLRMPSVSRKKHDQLRRMASRRADRSPAPQEEEPLPGTEEAKVRRTKP) form a disordered region. Residues 609–621 (SRKKHDQLRRMAS) are compositionally biased toward basic residues. An actin-binding region spans residues 666-690 (LDNITKSLTAPNVNNYFVFCLKPND). N-linked (GlcNAc...) asparagine glycosylation is present at Asn-668. Residues 794 to 817 (GDIGSPSRPDTPGHNPFSDSKARL) are disordered. 2 helical membrane-spanning segments follow: residues 894–914 (WLAIVYFLTWYLPDFAIKWIG) and 929–949 (FAINLLIWLSCGLVVFFIIVF). A Cytochrome b5 heme-binding domain is found at 957-1016 (QNVYSAAELSAHDGKGKHSAYVAIRGQVFDLGAFMPNHYPKIIPQSSLKKYAGVDATGLF). 2 N-linked (GlcNAc...) asparagine glycosylation sites follow: Asn-1043 and Asn-1068. A helical membrane pass occupies residues 1205 to 1225 (ILLAVSILLCSVIGFKFFAAL). N-linked (GlcNAc...) asparagine glycans are attached at residues Asn-1462 and Asn-1568. Helical transmembrane passes span 1599–1619 (LLSTVVAPVTVAYIAYLIVLL), 1626–1646 (VPLTAFILLGAIYGLQAIIFI), and 1653–1673 (MIGWMIVYILAMPVFSLGLPL). 2 N-linked (GlcNAc...) asparagine glycosylation sites follow: Asn-1759 and Asn-1790. Positions 1827 to 1882 (LPTDDMLLNEIRDILRTADLMTVTKKGIKQELERRFNVNLDMKRAYIGSATEAILS) constitute a DEK-C domain.

In the N-terminal section; belongs to the TRAFAC class myosin-kinesin ATPase superfamily. Myosin family. This sequence in the C-terminal section; belongs to the chitin synthase family. Class V subfamily. Maximal activity requires trypsin activation, suggesting a zymogenic nature.

It is found in the cell membrane. It localises to the membrane. The catalysed reaction is [(1-&gt;4)-N-acetyl-beta-D-glucosaminyl](n) + UDP-N-acetyl-alpha-D-glucosamine = [(1-&gt;4)-N-acetyl-beta-D-glucosaminyl](n+1) + UDP + H(+). Polymerizes chitin, a structural polymer of the cell wall and septum, by transferring the sugar moiety of UDP-GlcNAc to the non-reducing end of the growing chitin polymer. CHS5 is required for the sustained growth at 37 degrees Celsius and is of critical importance for virulence. Especially important at infection temperatures for maintaining the cell wall integrity of developing yeast buds, elongating tips of hyphae, and random sites of expansion in sclerotic forms. The protein is Chitin synthase 5 of Exophiala dermatitidis (Black yeast-like fungus).